Here is a 217-residue protein sequence, read N- to C-terminus: Ependymin (217 aa).

An N-terminal signal peptide occupies residues 1 to 20 (MHTVKLLCVVFSCLCAIGWA). N-linked (GlcNAc...) asparagine glycosylation is found at Asn-73 and Asn-96.

Belongs to the ependymin family. As to quaternary structure, forms disulfide-linked dimers. In terms of processing, binds calcium through the terminal sialic acids. EPDs are synthesized in the meninx and secreted in the cerebrospinal fluid.

Its subcellular location is the secreted. Functionally, may play a role in neural plasticity. May be involved during axon regeneration. The protein is Ependymin (epd) of Danio rerio (Zebrafish).